We begin with the raw amino-acid sequence, 37 residues long: Large ribosomal subunit protein bL36 (37 aa).

Belongs to the bacterial ribosomal protein bL36 family.

The sequence is that of Large ribosomal subunit protein bL36 from Laribacter hongkongensis (strain HLHK9).